We begin with the raw amino-acid sequence, 185 residues long: Pro-adrenomedullin (185 aa).

The N-terminal stretch at 1 to 21 is a signal peptide; that stretch reads MKLVSIALMLLGSLAVLGADT. Arginine amide is present on R41. Positions 45-91 are excised as a propeptide; that stretch reads ELQASSSYPTGLVDEKTVPTQTLGLQDKQSTSSTPQASTQSTAHIRV. The segment at 68-89 is disordered; that stretch reads GLQDKQSTSSTPQASTQSTAHI. Positions 73 to 87 are enriched in low complexity; sequence QSTSSTPQASTQSTA. C107 and C112 are joined by a disulfide. Residues 125–185 form a disordered region; sequence TDKDKDGMAP…HQDISRVSRL (61 aa). Residue Y143 is modified to Tyrosine amide. Residues 150-185 constitute a propeptide, preproAM C-terminal fragment; that stretch reads SLPEVLRARTVESSQEQTHSAPASPAHQDISRVSRL. Positions 160 to 170 are enriched in polar residues; that stretch reads VESSQEQTHSA.

The protein belongs to the adrenomedullin family. Expressed in adrenal glands, lung, kidney, heart, spleen, duodenum and submandibular glands.

The protein localises to the secreted. Functionally, adrenomedullin/ADM and proadrenomedullin N-20 terminal peptide/PAMP are peptide hormones that act as potent hypotensive and vasodilatator agents. Numerous actions have been reported most related to the physiologic control of fluid and electrolyte homeostasis. Its function is as follows. ADM function is mediated by the CALCRL-RAMP2 and CALCRL-RAMP3 receptor complexes with ADM showing the highest potency for the CALCRL-RAMP2 complex. The protein is Pro-adrenomedullin of Rattus norvegicus (Rat).